The chain runs to 325 residues: Tetraacyldisaccharide 4'-kinase (325 aa).

55–62 serves as a coordination point for ATP; it reads TAGGNGKT.

This sequence belongs to the LpxK family.

The catalysed reaction is a lipid A disaccharide + ATP = a lipid IVA + ADP + H(+). Its pathway is glycolipid biosynthesis; lipid IV(A) biosynthesis; lipid IV(A) from (3R)-3-hydroxytetradecanoyl-[acyl-carrier-protein] and UDP-N-acetyl-alpha-D-glucosamine: step 6/6. Transfers the gamma-phosphate of ATP to the 4'-position of a tetraacyldisaccharide 1-phosphate intermediate (termed DS-1-P) to form tetraacyldisaccharide 1,4'-bis-phosphate (lipid IVA). The polypeptide is Tetraacyldisaccharide 4'-kinase (Salmonella typhi).